A 276-amino-acid polypeptide reads, in one-letter code: MLFKQWNDLPEPKHLLDLPEISKNLQSLEVCPVPKVEFPQDLDVPQYSTAVITTKIMNPLFPKNLLQLTSIGEIKTTLTVKSPSLPQSSGKHSWNYDENFPNEVDPDQKNDTADETVYGFSFPIYSFGKTLLFSMEENFISISPIFGNMISRSIISQLAQFSPDIIVIGTSDKIASMKVMTENECTLQPPEFITGFIGSVLTQLIVGPSKGLKFKCLVAPSEGPNGFEKLSLSDMGSLVDLCGQWLGFEPSRYSEECYRLWRCDSAAIGAQSGLYI.

Belongs to the PSMG1 family. As to quaternary structure, component of the 20S proteasome chaperone. Forms a heterodimer with ADD66 that binds to proteasome precursors.

Its subcellular location is the cytoplasm. Its function is as follows. Involved in 20S proteasome assembly. The sequence is that of Proteasome chaperone 1 (PBA1) from Saccharomyces cerevisiae (strain ATCC 204508 / S288c) (Baker's yeast).